The following is a 261-amino-acid chain: Ribosomal RNA small subunit methyltransferase J (261 aa).

S-adenosyl-L-methionine contacts are provided by residues 111–112, 127–128, 163–164, and aspartate 181; these read RD, ER, and SS.

This sequence belongs to the methyltransferase superfamily. RsmJ family.

The protein resides in the cytoplasm. It catalyses the reaction guanosine(1516) in 16S rRNA + S-adenosyl-L-methionine = N(2)-methylguanosine(1516) in 16S rRNA + S-adenosyl-L-homocysteine + H(+). Functionally, specifically methylates the guanosine in position 1516 of 16S rRNA. This Shewanella sp. (strain ANA-3) protein is Ribosomal RNA small subunit methyltransferase J.